A 293-amino-acid polypeptide reads, in one-letter code: 4-hydroxy-tetrahydrodipicolinate synthase (293 aa).

Residue Thr47 participates in pyruvate binding. Catalysis depends on Tyr136, which acts as the Proton donor/acceptor. The Schiff-base intermediate with substrate role is filled by Lys164. Ile206 contributes to the pyruvate binding site.

The protein belongs to the DapA family. As to quaternary structure, homotetramer; dimer of dimers.

It is found in the cytoplasm. It catalyses the reaction L-aspartate 4-semialdehyde + pyruvate = (2S,4S)-4-hydroxy-2,3,4,5-tetrahydrodipicolinate + H2O + H(+). Its pathway is amino-acid biosynthesis; L-lysine biosynthesis via DAP pathway; (S)-tetrahydrodipicolinate from L-aspartate: step 3/4. Catalyzes the condensation of (S)-aspartate-beta-semialdehyde [(S)-ASA] and pyruvate to 4-hydroxy-tetrahydrodipicolinate (HTPA). The sequence is that of 4-hydroxy-tetrahydrodipicolinate synthase from Listeria monocytogenes serotype 4b (strain CLIP80459).